Here is a 974-residue protein sequence, read N- to C-terminus: Leucine-rich repeat receptor-like kinase protein SUNN (974 aa).

The N-terminal stretch at 1-20 is a signal peptide; sequence MKNITCYLLLLCMLFTTCYS. Asparagine 75, asparagine 104, asparagine 123, and asparagine 136 each carry an N-linked (GlcNAc...) asparagine glycan. 20 LRR repeats span residues 92-116, 117-141, 143-165, 166-188, 189-213, 238-262, 263-286, 288-309, 310-334, 335-358, 360-382, 383-406, 407-430, 431-454, 456-477, 478-501, 503-525, 527-549, 550-573, and 574-598; these read LNML…LSKL, TSLR…TFGM, KLEA…IVSL, MKLK…SYSE, FQKL…LSKL, IKSL…LGNL, ENLD…LSSM, SLMS…TFSK, LKNL…IGDL, PNLE…LGSN, KFIY…LCKS, KKLK…IGPC, KSLE…IFQL, PSVQ…ISGN, LGNL…MKNL, RSLQ…VFAL, VLTR…VTQC, SLTA…MKNL, KVLS…IRFM, and TSLT…QFLV. Residues asparagine 250 and asparagine 274 are each glycosylated (N-linked (GlcNAc...) asparagine). N-linked (GlcNAc...) asparagine glycans are attached at residues asparagine 312 and asparagine 346. 2 N-linked (GlcNAc...) asparagine glycosylation sites follow: asparagine 508 and asparagine 513. N-linked (GlcNAc...) asparagine glycosylation is found at asparagine 556 and asparagine 585. A helical transmembrane segment spans residues 635–655; it reads VVIAIVFATAVLMVIVTLHMM. Residues 685–972 enclose the Protein kinase domain; the sequence is LKEENIIGKG…PPHSTSHNLI (288 aa). Residues 691 to 699 and lysine 713 each bind ATP; that span reads IGKGGAGIV. Aspartate 810 serves as the catalytic Proton acceptor.

Belongs to the protein kinase superfamily. Ser/Thr protein kinase family. Expressed in roots and shoots. Expressed in the vasculature of leaves, petioles, stems and roots.

Its subcellular location is the cell membrane. The enzyme catalyses L-seryl-[protein] + ATP = O-phospho-L-seryl-[protein] + ADP + H(+). The catalysed reaction is L-threonyl-[protein] + ATP = O-phospho-L-threonyl-[protein] + ADP + H(+). Functionally, LRR receptor kinase involved in the regulation of root growth and root nodule organogenesis. Involved in long distance nodulation signaling events. Involved in the autoregulation of nodulation (AON), a long distance systemic signaling from root to shoot and back again, which allows legumes to limit the number of root nodules formed based on available nitrogen and previous rhizobial colonization. Acts from shoot to root to control AON. Interacts with CLE12 and CLE13 signaling to control nodule numbers. Required for the modulation of shoot-to-root auxin transport in response to altered nitrogen tissue concentrations and in the absence of rhizobia. Shoot-to-root auxin transport influences lateral root density and length. Involved in the regulation of root colonization by arbuscular mycorrhizal (AM) fungi. Interacts with CLE33 and CL53 signaling to repress strigolactone biosynthetic genes and strigolactone content in the roots, and consequently reduces the promotion of further colonization by AM fungi. The polypeptide is Leucine-rich repeat receptor-like kinase protein SUNN (Medicago truncatula (Barrel medic)).